We begin with the raw amino-acid sequence, 366 residues long: tRNA/tmRNA (uracil-C(5))-methyltransferase (366 aa).

5 residues coordinate S-adenosyl-L-methionine: glutamine 190, tyrosine 218, asparagine 223, glutamate 239, and aspartate 299. Residue cysteine 324 is the Nucleophile of the active site. Glutamate 358 (proton acceptor) is an active-site residue.

It belongs to the class I-like SAM-binding methyltransferase superfamily. RNA M5U methyltransferase family. TrmA subfamily.

The enzyme catalyses uridine(54) in tRNA + S-adenosyl-L-methionine = 5-methyluridine(54) in tRNA + S-adenosyl-L-homocysteine + H(+). The catalysed reaction is uridine(341) in tmRNA + S-adenosyl-L-methionine = 5-methyluridine(341) in tmRNA + S-adenosyl-L-homocysteine + H(+). In terms of biological role, dual-specificity methyltransferase that catalyzes the formation of 5-methyluridine at position 54 (m5U54) in all tRNAs, and that of position 341 (m5U341) in tmRNA (transfer-mRNA). This Salmonella heidelberg (strain SL476) protein is tRNA/tmRNA (uracil-C(5))-methyltransferase.